The sequence spans 491 residues: Glutamyl-tRNA(Gln) amidotransferase subunit A (491 aa).

Active-site charge relay system residues include Lys79 and Ser158. The Acyl-ester intermediate role is filled by Ser182.

Belongs to the amidase family. GatA subfamily. In terms of assembly, heterotrimer of A, B and C subunits.

The enzyme catalyses L-glutamyl-tRNA(Gln) + L-glutamine + ATP + H2O = L-glutaminyl-tRNA(Gln) + L-glutamate + ADP + phosphate + H(+). Functionally, allows the formation of correctly charged Gln-tRNA(Gln) through the transamidation of misacylated Glu-tRNA(Gln) in organisms which lack glutaminyl-tRNA synthetase. The reaction takes place in the presence of glutamine and ATP through an activated gamma-phospho-Glu-tRNA(Gln). This is Glutamyl-tRNA(Gln) amidotransferase subunit A from Anaplasma phagocytophilum (strain HZ).